Here is a 374-residue protein sequence, read N- to C-terminus: Putative glutamate--cysteine ligase 2 (374 aa).

Belongs to the glutamate--cysteine ligase type 2 family. YbdK subfamily.

The enzyme catalyses L-cysteine + L-glutamate + ATP = gamma-L-glutamyl-L-cysteine + ADP + phosphate + H(+). ATP-dependent carboxylate-amine ligase which exhibits weak glutamate--cysteine ligase activity. The chain is Putative glutamate--cysteine ligase 2 from Acidovorax sp. (strain JS42).